Here is a 321-residue protein sequence, read N- to C-terminus: MATTTTTQGQQTAIDSAVLDDIIRRLTEVRLARPGKQVQLSEAEIKQLCTTARDIFLQQPNLLELEAPIKICGDIHGQYSDLLRLFEYGGFPPSANYLFLGDYVDRGKQSLETICLLLAYKIKYPGNFFLLRGNHECASINRIYGFYDECKRRFNVRVWKVFTDCFNCLPVAALIDDKILCMHGGLSPDLDHLDEIRNLPRPTMIPDTGLLCDLLWSDPGKDVKGWGMNDRGVSYTFGPDKVSEFLTKHDLDLVCRAHQVVEDGYEFFADRQLVTVFSAPNYCGEFDNAGAMMSVDENLMCSFQILKPAEKKTKFMMSTKI.

Position 2 is an N-acetylalanine (Ala2). Residues Asp74, His76, Asp102, and Asn134 each contribute to the Mn(2+) site. His135 serves as the catalytic Proton donor. Mn(2+) contacts are provided by His183 and His258.

It belongs to the PPP phosphatase family. PP-1 subfamily. In terms of assembly, interacts with the DELLA proteins RGA and GAI. Interacts with PIF3 and PIF5. Interacts with the auxin efflux carrier PIN1. Mn(2+) is required as a cofactor. In terms of tissue distribution, expressed in the vasculature of roots and cotyledons, tips of leaves, guard cells, bases of trichomes, pistils and stamen filaments.

It is found in the nucleus. The protein resides in the cytoplasm. It carries out the reaction O-phospho-L-seryl-[protein] + H2O = L-seryl-[protein] + phosphate. The enzyme catalyses O-phospho-L-threonyl-[protein] + H2O = L-threonyl-[protein] + phosphate. With respect to regulation, phosphatase activity is strongly reduced by the protein phosphatase inhibitor 2 (I-2). Serine/threonine-protein phosphatase that possesses phosphatase activity toward para-nitrophenyl phosphate (pNPP) in vitro. Acts as a positive regulator in the gibberellin (GA) signaling pathway to regulate plant growth and development. Promotes the GA-induced and proteasomal-dependent degradation of the DELLA proteins RGA and GAI by directly binding and dephosphorylating these proteins. Involved in the regulation of phytochrome B (phyB) signaling pathway that controls photomorphogenesis. Promotes the proteasomal-dependent degradation of PIF5 factor by directly binding and dephosphorylating this protein. Involved in the regulation of pavement cell (PC) interdigitation by modulating the auxin efflux carrier PIN1 polarity and endocytic trafficking. Regulates PIN1 polar targeting through direct binding and dephosphorylation. Acts antagonistically with PID in regulating PC development. This Arabidopsis thaliana (Mouse-ear cress) protein is Serine/threonine-protein phosphatase PP1 isozyme 4.